Consider the following 425-residue polypeptide: Serine hydroxymethyltransferase (425 aa).

132-134 (GHL) provides a ligand contact to (6S)-5,6,7,8-tetrahydrofolate. Residue K237 is modified to N6-(pyridoxal phosphate)lysine.

The protein belongs to the SHMT family. In terms of assembly, homodimer. The cofactor is pyridoxal 5'-phosphate.

The protein localises to the cytoplasm. It carries out the reaction (6R)-5,10-methylene-5,6,7,8-tetrahydrofolate + glycine + H2O = (6S)-5,6,7,8-tetrahydrofolate + L-serine. It participates in one-carbon metabolism; tetrahydrofolate interconversion. The protein operates within amino-acid biosynthesis; glycine biosynthesis; glycine from L-serine: step 1/1. In terms of biological role, catalyzes the reversible interconversion of serine and glycine with tetrahydrofolate (THF) serving as the one-carbon carrier. This reaction serves as the major source of one-carbon groups required for the biosynthesis of purines, thymidylate, methionine, and other important biomolecules. Also exhibits THF-independent aldolase activity toward beta-hydroxyamino acids, producing glycine and aldehydes, via a retro-aldol mechanism. The sequence is that of Serine hydroxymethyltransferase from Wolbachia sp. subsp. Brugia malayi (strain TRS).